The sequence spans 312 residues: Glyoxylate/hydroxypyruvate reductase A (312 aa).

The active site involves Arg-227. His-275 acts as the Proton donor in catalysis.

It belongs to the D-isomer specific 2-hydroxyacid dehydrogenase family. GhrA subfamily.

It localises to the cytoplasm. The catalysed reaction is glycolate + NADP(+) = glyoxylate + NADPH + H(+). It carries out the reaction (R)-glycerate + NAD(+) = 3-hydroxypyruvate + NADH + H(+). The enzyme catalyses (R)-glycerate + NADP(+) = 3-hydroxypyruvate + NADPH + H(+). Functionally, catalyzes the NADPH-dependent reduction of glyoxylate and hydroxypyruvate into glycolate and glycerate, respectively. This Escherichia coli O81 (strain ED1a) protein is Glyoxylate/hydroxypyruvate reductase A.